A 320-amino-acid polypeptide reads, in one-letter code: o-succinylbenzoate synthase (320 aa).

Lys133 (proton donor) is an active-site residue. Positions 161, 190, and 213 each coordinate Mg(2+). Lys235 functions as the Proton acceptor in the catalytic mechanism.

This sequence belongs to the mandelate racemase/muconate lactonizing enzyme family. MenC type 1 subfamily. It depends on a divalent metal cation as a cofactor.

The catalysed reaction is (1R,6R)-6-hydroxy-2-succinyl-cyclohexa-2,4-diene-1-carboxylate = 2-succinylbenzoate + H2O. It functions in the pathway quinol/quinone metabolism; 1,4-dihydroxy-2-naphthoate biosynthesis; 1,4-dihydroxy-2-naphthoate from chorismate: step 4/7. The protein operates within quinol/quinone metabolism; menaquinone biosynthesis. Its function is as follows. Converts 2-succinyl-6-hydroxy-2,4-cyclohexadiene-1-carboxylate (SHCHC) to 2-succinylbenzoate (OSB). This is o-succinylbenzoate synthase from Salmonella newport (strain SL254).